A 261-amino-acid chain; its full sequence is Thiazole synthase (261 aa).

The active-site Schiff-base intermediate with DXP is the Lys102. 1-deoxy-D-xylulose 5-phosphate contacts are provided by residues Gly163, 189–190, and 211–212; these read AG and NT.

This sequence belongs to the ThiG family. In terms of assembly, homotetramer. Forms heterodimers with either ThiH or ThiS.

Its subcellular location is the cytoplasm. The catalysed reaction is [ThiS sulfur-carrier protein]-C-terminal-Gly-aminoethanethioate + 2-iminoacetate + 1-deoxy-D-xylulose 5-phosphate = [ThiS sulfur-carrier protein]-C-terminal Gly-Gly + 2-[(2R,5Z)-2-carboxy-4-methylthiazol-5(2H)-ylidene]ethyl phosphate + 2 H2O + H(+). The protein operates within cofactor biosynthesis; thiamine diphosphate biosynthesis. In terms of biological role, catalyzes the rearrangement of 1-deoxy-D-xylulose 5-phosphate (DXP) to produce the thiazole phosphate moiety of thiamine. Sulfur is provided by the thiocarboxylate moiety of the carrier protein ThiS. In vitro, sulfur can be provided by H(2)S. The protein is Thiazole synthase of Acinetobacter baylyi (strain ATCC 33305 / BD413 / ADP1).